The chain runs to 985 residues: DNA ligase 4 (985 aa).

2 disordered regions span residues 1 to 27 (MDRL…RNKH) and 43 to 70 (LNGN…QTLS). Residues 10-20 (ETERELDEKYP) show a composition bias toward basic and acidic residues. The span at 46 to 61 (NKKRPTGPAAARKKLG) shows a compositional bias: basic residues. Residues Glu310, Lys312, Leu313, Arg317, Glu379, Phe420, Glu480, Lys485, Lys502, and Lys504 each coordinate ATP. Residue Lys312 is the N6-AMP-lysine intermediate of the active site. Glu379 contributes to the Mg(2+) binding site. Residue Glu480 coordinates Mg(2+). 2 BRCT domains span residues 711–804 (PSGH…PDLL) and 878–983 (LRGW…RFAP).

This sequence belongs to the ATP-dependent DNA ligase family. The cofactor is Mg(2+).

The protein localises to the nucleus. It catalyses the reaction ATP + (deoxyribonucleotide)n-3'-hydroxyl + 5'-phospho-(deoxyribonucleotide)m = (deoxyribonucleotide)n+m + AMP + diphosphate.. Functionally, DNA ligase involved in DNA non-homologous end joining (NHEJ); required for double-strand break (DSB) repair. The chain is DNA ligase 4 (LIG4) from Coccidioides immitis (strain RS) (Valley fever fungus).